The following is a 155-amino-acid chain: V-type proton ATPase 16 kDa proteolipid subunit c (155 aa).

The Lumenal portion of the chain corresponds to 1–10 (MSESKSGPEY). Residues 11-33 (ASFFAVMGASAAMVFSALGAAYG) traverse the membrane as a helical segment. Over 34–55 (TAKSGTGIAAMSVMRPEQIMKS) the chain is Cytoplasmic. A helical membrane pass occupies residues 56 to 76 (IIPVVMAGIIAIYGLVVAVLI). The Lumenal portion of the chain corresponds to 77–92 (ANSLNDDISLYKSFLQ). A helical membrane pass occupies residues 93 to 114 (LGAGLSVGLSGLAAGFAIGIVG). The Cytoplasmic portion of the chain corresponds to 115 to 131 (DAGVRGTAQQPRLFVGM). The chain crosses the membrane as a helical span at residues 132-152 (ILILIFAEVLGLYGLIVALIL). Residues 153 to 155 (STK) lie on the Lumenal side of the membrane.

The protein belongs to the V-ATPase proteolipid subunit family. As to quaternary structure, V-ATPase is a heteromultimeric enzyme made up of two complexes: the ATP-hydrolytic V1 complex and the proton translocation V0 complex. The V1 complex consists of three catalytic AB heterodimers that form a heterohexamer, three peripheral stalks each consisting of EG heterodimers, one central rotor including subunits D and F, and the regulatory subunits C and H. The proton translocation complex V0 consists of the proton transport subunit a, a ring of proteolipid subunits c9c'', rotary subunit d, subunits e and f, and the accessory subunits ATP6AP1/Ac45 and ATP6AP2/PRR. Interacts with the V0 complex V-ATPase subunit a4 ATP6V0A4. Interacts with LASS2. Interacts with RNF182; this interaction leads to ubiquitination and degradation via the proteasome pathway. In terms of assembly, (Microbial infection) Interacts with HTLV-1 accessory protein p12I. Ubiquitinated by RNF182, leading to its degradation via the ubiquitin-proteasome pathway.

The protein resides in the cytoplasmic vesicle. It localises to the clathrin-coated vesicle membrane. Its subcellular location is the secretory vesicle. The protein localises to the synaptic vesicle membrane. In terms of biological role, proton-conducting pore forming subunit of the V0 complex of vacuolar(H+)-ATPase (V-ATPase), a multisubunit enzyme composed of a peripheral complex (V1) that hydrolyzes ATP and a membrane integral complex (V0) that translocates protons. V-ATPase is responsible for acidifying and maintaining the pH of intracellular compartments, and in some cell types, it is targeted to the plasma membrane, where it is responsible for acidifying the extracellular environment. The protein is V-type proton ATPase 16 kDa proteolipid subunit c (ATP6V0C) of Homo sapiens (Human).